Here is a 329-residue protein sequence, read N- to C-terminus: 4-methyl-2-oxopentanoate reductase A (329 aa).

NAD(+) contacts are provided by residues 162 to 163, 240 to 242, and Asp-266; these read GI and TAR. Residue Arg-242 is part of the active site. Glu-271 is a catalytic residue. Catalysis depends on His-289, which acts as the Proton donor.

It belongs to the D-isomer specific 2-hydroxyacid dehydrogenase family.

It catalyses the reaction (2R)-hydroxy-4-methylpentanoate + NADP(+) = 4-methyl-2-oxopentanoate + NADPH + H(+). The catalysed reaction is a (2R)-2-hydroxycarboxylate + NADP(+) = a 2-oxocarboxylate + NADPH + H(+). Its function is as follows. 4-methyl-2-oxopentanoate (MOA) reductase that reduces MOA, a possible intermediate in leucine synthesis, to D-leucate in a NADPH- or NADH-dependent manner, but with a preference for NADPH. In addition to MOA, shows broad substrate specificity toward 2-keto acids. The polypeptide is 4-methyl-2-oxopentanoate reductase A (Aspergillus oryzae (strain ATCC 42149 / RIB 40) (Yellow koji mold)).